We begin with the raw amino-acid sequence, 319 residues long: Ribonucleoside-diphosphate reductase small chain (319 aa).

The segment at 313–319 (FSLDVDF) is interaction with R1.

Belongs to the ribonucleoside diphosphate reductase small chain family. Interacts with RNR1/OPG080 subunit. Can interact with host RNR1 supunit. The cofactor is Fe cation.

The enzyme catalyses a 2'-deoxyribonucleoside 5'-diphosphate + [thioredoxin]-disulfide + H2O = a ribonucleoside 5'-diphosphate + [thioredoxin]-dithiol. Its function is as follows. Ribonucleoside-diphosphate reductase holoenzyme provides the precursors necessary for viral DNA synthesis. Allows virus growth in non-dividing cells. Catalyzes the biosynthesis of deoxyribonucleotides from the corresponding ribonucleotides. This is Ribonucleoside-diphosphate reductase small chain (OPG048) from Cynomys gunnisoni (Gunnison's prairie dog).